Reading from the N-terminus, the 660-residue chain is Bifunctional polymyxin resistance protein ArnA (660 aa).

The formyltransferase ArnAFT stretch occupies residues 1-304 (MKAVIFAYHD…TLGLVAGARL (304 aa)). The Proton donor; for formyltransferase activity role is filled by histidine 104. (6R)-10-formyltetrahydrofolate is bound by residues arginine 114 and 136 to 140 (VKRAD). A dehydrogenase ArnADH region spans residues 314 to 660 (RRIRVLILGV…RSVDVAERAS (347 aa)). NAD(+) is bound by residues aspartate 347 and 368 to 369 (DI). Residues alanine 393, tyrosine 398, and 432 to 433 (TS) contribute to the UDP-alpha-D-glucuronate site. The active-site Proton acceptor; for decarboxylase activity is the glutamate 434. UDP-alpha-D-glucuronate-binding positions include arginine 460, asparagine 492, 526–535 (KLIDGGQQKR), and tyrosine 613. Arginine 619 serves as the catalytic Proton donor; for decarboxylase activity.

The protein in the N-terminal section; belongs to the Fmt family. UDP-L-Ara4N formyltransferase subfamily. It in the C-terminal section; belongs to the NAD(P)-dependent epimerase/dehydratase family. UDP-glucuronic acid decarboxylase subfamily. As to quaternary structure, homohexamer, formed by a dimer of trimers.

The enzyme catalyses UDP-alpha-D-glucuronate + NAD(+) = UDP-beta-L-threo-pentopyranos-4-ulose + CO2 + NADH. It catalyses the reaction UDP-4-amino-4-deoxy-beta-L-arabinose + (6R)-10-formyltetrahydrofolate = UDP-4-deoxy-4-formamido-beta-L-arabinose + (6S)-5,6,7,8-tetrahydrofolate + H(+). The protein operates within nucleotide-sugar biosynthesis; UDP-4-deoxy-4-formamido-beta-L-arabinose biosynthesis; UDP-4-deoxy-4-formamido-beta-L-arabinose from UDP-alpha-D-glucuronate: step 1/3. It functions in the pathway nucleotide-sugar biosynthesis; UDP-4-deoxy-4-formamido-beta-L-arabinose biosynthesis; UDP-4-deoxy-4-formamido-beta-L-arabinose from UDP-alpha-D-glucuronate: step 3/3. Its pathway is bacterial outer membrane biogenesis; lipopolysaccharide biosynthesis. Bifunctional enzyme that catalyzes the oxidative decarboxylation of UDP-glucuronic acid (UDP-GlcUA) to UDP-4-keto-arabinose (UDP-Ara4O) and the addition of a formyl group to UDP-4-amino-4-deoxy-L-arabinose (UDP-L-Ara4N) to form UDP-L-4-formamido-arabinose (UDP-L-Ara4FN). The modified arabinose is attached to lipid A and is required for resistance to polymyxin and cationic antimicrobial peptides. This is Bifunctional polymyxin resistance protein ArnA from Salmonella newport (strain SL254).